The chain runs to 316 residues: Olfactory receptor 6B9 (316 aa).

Topologically, residues 1 to 22 (MENITNISEFILMGFPTAPWLQ) are extracellular. Asparagine 3 and asparagine 6 each carry an N-linked (GlcNAc...) asparagine glycan. A helical membrane pass occupies residues 23–43 (ILLFSIFFITYVFVLLENLVI). At 44–64 (ILTVWVTGSLHKPMYYFLSTM) the chain is on the cytoplasmic side. A helical transmembrane segment spans residues 65–85 (SFLEAWYISVTVPKMLAGFLF). At 86 to 97 (RPNTISFLGCMT) the chain is on the extracellular side. The cysteines at positions 95 and 187 are disulfide-linked. A helical membrane pass occupies residues 98 to 118 (QLYFFMSLACTECVLLAAMAY). At 119–132 (DRYVAICWPLRYPV) the chain is on the cytoplasmic side. A helical transmembrane segment spans residues 133–153 (MMTTGFCVQLTISSWVSGFTI). Over 154 to 199 (SMAKVYFISRVAFCGNNVLNHFFCDVSPILKLACMNLSMAETVDFA) the chain is Extracellular. Residues 200-220 (LAIVILIFPLSATVLSYGFIV) traverse the membrane as a helical segment. Residues 221–237 (STVLQIPSATGQRKAFS) are Cytoplasmic-facing. A helical membrane pass occupies residues 238-258 (TCASHLTVVVIFYTAVIFMYV). Residues 259-269 (RPRAIASFNSN) lie on the Extracellular side of the membrane. A helical transmembrane segment spans residues 270–290 (KLISAIYAVFTPMLNPIIYCL). The Cytoplasmic portion of the chain corresponds to 291–316 (RNKEVKDAIRKTIAGGRAPALGESIS).

Belongs to the G-protein coupled receptor 1 family. Olfactory epithelium.

It is found in the cell membrane. Odorant receptor. The chain is Olfactory receptor 6B9 from Mus musculus (Mouse).